The sequence spans 125 residues: Large ribosomal subunit protein bL12 (125 aa).

It belongs to the bacterial ribosomal protein bL12 family. Homodimer. Part of the ribosomal stalk of the 50S ribosomal subunit. Forms a multimeric L10(L12)X complex, where L10 forms an elongated spine to which 2 to 4 L12 dimers bind in a sequential fashion. Binds GTP-bound translation factors.

In terms of biological role, forms part of the ribosomal stalk which helps the ribosome interact with GTP-bound translation factors. Is thus essential for accurate translation. This Sphingopyxis alaskensis (strain DSM 13593 / LMG 18877 / RB2256) (Sphingomonas alaskensis) protein is Large ribosomal subunit protein bL12.